Reading from the N-terminus, the 462-residue chain is ATP synthase subunit beta (462 aa).

152–159 (GGAGVGKT) provides a ligand contact to ATP.

The protein belongs to the ATPase alpha/beta chains family. F-type ATPases have 2 components, CF(1) - the catalytic core - and CF(0) - the membrane proton channel. CF(1) has five subunits: alpha(3), beta(3), gamma(1), delta(1), epsilon(1). CF(0) has three main subunits: a(1), b(2) and c(9-12). The alpha and beta chains form an alternating ring which encloses part of the gamma chain. CF(1) is attached to CF(0) by a central stalk formed by the gamma and epsilon chains, while a peripheral stalk is formed by the delta and b chains.

It is found in the cell inner membrane. It catalyses the reaction ATP + H2O + 4 H(+)(in) = ADP + phosphate + 5 H(+)(out). Produces ATP from ADP in the presence of a proton gradient across the membrane. The catalytic sites are hosted primarily by the beta subunits. The sequence is that of ATP synthase subunit beta from Blochmanniella pennsylvanica (strain BPEN).